We begin with the raw amino-acid sequence, 130 residues long: Small ribosomal subunit protein uS9 (130 aa).

It belongs to the universal ribosomal protein uS9 family.

This chain is Small ribosomal subunit protein uS9, found in Streptococcus suis (strain 98HAH33).